Consider the following 218-residue polypeptide: Flagellin B1 (218 aa).

A propeptide spanning residues 1-12 (MNIKEFLSNKKG) is cleaved from the precursor. Asparagine 38, asparagine 71, asparagine 77, asparagine 115, and asparagine 136 each carry an N-linked (GlcNAc...) asparagine glycan.

The protein belongs to the archaeal flagellin family. Post-translationally, N-linked glycans consist of the 779 Da trisaccharide beta-ManNAc(Thr)-(1-4)-beta-GlcNAc3NAcA-(1-3)-beta-GlcNAc.

It localises to the archaeal flagellum. Functionally, flagellin is the subunit protein which polymerizes to form the filaments of archaeal flagella. This Methanococcus voltae protein is Flagellin B1 (flaB1).